The following is a 20-amino-acid chain: Mu-conotoxin SIIIB (20 aa).

Gln-1 carries the post-translational modification Pyrrolidone carboxylic acid. 3 disulfides stabilise this stretch: Cys-3/Cys-13, Cys-4/Cys-19, and Cys-8/Cys-20. Cys-20 carries the post-translational modification Cysteine amide.

Expressed by the venom duct.

Its subcellular location is the secreted. In terms of biological role, mu-conotoxins block voltage-gated sodium channels (VGSC). Potently displaces (125)I-TIIIA from native rat brain Nav1.2/SCN2A (IC(50) is 5 nM) and muscle Nav1.4/SCN4A (IC(50) is 3 nM) VGSCs. Potently and irreversibly inhibits current through Xenopus oocyte-expressed Nav1.2/SCN2A and Nav1.4/SCN4A. In Conus striatus (Striated cone), this protein is Mu-conotoxin SIIIB.